The following is a 426-amino-acid chain: MTEIVDITAREILDSRGNPTVEVDVILEDGAMGRAAVPSGASTGAHEAVEKRDGDKARYLGKGVRQAVDAVNGEIYDALSGSDAEDQRRIDRMLIELDGTPNKSRLGANAILGVSLATAKAAASSSALPLYKYVGGVSARILPVPMMNIINGGAHADNPIDIQEFMILPTGAETFSEALRMGAEIFHALKKQLKDAGHNTNVGDEGGFAPNIGSAEEALAFIVKAGEGAGYRCGEDFHLGLDVASTEFFKNGKYVMEGEGKTVDPAGMVEYLAGLVSKFPIVTIEDGCAEDDFDGWKILTERLGGKVQLVGDDLFVTNPERLAVGIEKGLANSILVKVNQIGTLSETLDAVDMAHRNSYTAVMSHRSGETEDSTIADLSVATNCGQIKTGSLARSDRTAKYNQLLRIEEELGDQAIYAGRRALRAL.

(2R)-2-phosphoglycerate is bound at residue glutamine 163. Glutamate 205 serves as the catalytic Proton donor. Mg(2+) contacts are provided by aspartate 242, glutamate 285, and aspartate 312. (2R)-2-phosphoglycerate is bound by residues lysine 337, arginine 366, serine 367, and lysine 388. The active-site Proton acceptor is lysine 337.

The protein belongs to the enolase family. Mg(2+) serves as cofactor.

The protein localises to the cytoplasm. The protein resides in the secreted. Its subcellular location is the cell surface. The enzyme catalyses (2R)-2-phosphoglycerate = phosphoenolpyruvate + H2O. It participates in carbohydrate degradation; glycolysis; pyruvate from D-glyceraldehyde 3-phosphate: step 4/5. Its function is as follows. Catalyzes the reversible conversion of 2-phosphoglycerate (2-PG) into phosphoenolpyruvate (PEP). It is essential for the degradation of carbohydrates via glycolysis. The polypeptide is Enolase (Phenylobacterium zucineum (strain HLK1)).